An 83-amino-acid polypeptide reads, in one-letter code: Hainantoxin-III 8 (83 aa).

A signal peptide spans 1–21 (MKASMFLALAGLVLLFVVGYA). Positions 22-48 (SESEEKEFPRELLSKIFAVDDFTGEER) are excised as a propeptide. 3 disulfides stabilise this stretch: Cys50/Cys65, Cys57/Cys70, and Cys64/Cys77. Leu81 is modified (leucine amide).

Belongs to the neurotoxin 10 (Hwtx-1) family. 15 (Hntx-3) subfamily. In terms of assembly, monomer. As to expression, expressed by the venom gland.

It is found in the secreted. Its function is as follows. Selective antagonist of neuronal tetrodotoxin (TTX)-sensitive voltage-gated sodium channels (IC(50)=1270 nM on Nav1.1/SCN1A, 270 nM on Nav1.2/SCN2A, 491 nM on Nav1.3/SCN3A and 232 nM on Nav1.7/SCN9A). This toxin suppress Nav1.7 current amplitude without significantly altering the activation, inactivation, and repriming kinetics. Short extreme depolarizations partially activate the toxin-bound channel, indicating voltage-dependent inhibition of this toxin. This toxin increases the deactivation of the Nav1.7 current after extreme depolarizations. The toxin-Nav1.7 complex is gradually dissociated upon prolonged strong depolarizations in a voltage-dependent manner, and the unbound toxin rebinds to Nav1.7 after a long repolarization. Moreover, analysis of chimeric channels showed that the DIIS3-S4 linker is critical for toxin binding to Nav1.7. These data are consistent with this toxin interacting with Nav1.7 site 4 and trapping the domain II voltage sensor in the closed state. This Cyriopagopus hainanus (Chinese bird spider) protein is Hainantoxin-III 8.